The chain runs to 476 residues: Cysteine--tRNA ligase (476 aa).

Cys-36 contributes to the Zn(2+) binding site. The 'HIGH' region signature appears at 38–48; that stretch reads PTVYDYAHIGN. Cys-221, His-246, and Glu-250 together coordinate Zn(2+). Positions 278 to 282 match the 'KMSKS' region motif; sequence KMSKS. Lys-281 is a binding site for ATP.

This sequence belongs to the class-I aminoacyl-tRNA synthetase family. In terms of assembly, monomer. It depends on Zn(2+) as a cofactor.

Its subcellular location is the cytoplasm. It carries out the reaction tRNA(Cys) + L-cysteine + ATP = L-cysteinyl-tRNA(Cys) + AMP + diphosphate. The polypeptide is Cysteine--tRNA ligase (Chlamydia felis (strain Fe/C-56) (Chlamydophila felis)).